A 362-amino-acid polypeptide reads, in one-letter code: 3-dehydroquinate synthase (362 aa).

NAD(+) contacts are provided by residues 71–76, 105–109, 129–130, Lys142, Lys151, and 169–172; these read DGERYK, GVIGD, TT, and CLKT. Residues Glu184, His247, and His264 each contribute to the Zn(2+) site.

This sequence belongs to the sugar phosphate cyclases superfamily. Dehydroquinate synthase family. It depends on Co(2+) as a cofactor. Zn(2+) is required as a cofactor. The cofactor is NAD(+).

Its subcellular location is the cytoplasm. The catalysed reaction is 7-phospho-2-dehydro-3-deoxy-D-arabino-heptonate = 3-dehydroquinate + phosphate. Its pathway is metabolic intermediate biosynthesis; chorismate biosynthesis; chorismate from D-erythrose 4-phosphate and phosphoenolpyruvate: step 2/7. Catalyzes the conversion of 3-deoxy-D-arabino-heptulosonate 7-phosphate (DAHP) to dehydroquinate (DHQ). The polypeptide is 3-dehydroquinate synthase (Salmonella arizonae (strain ATCC BAA-731 / CDC346-86 / RSK2980)).